The sequence spans 435 residues: Enolase (435 aa).

Residue Gln-163 coordinates (2R)-2-phosphoglycerate. The active-site Proton donor is the Glu-205. Asp-243, Glu-292, and Asp-319 together coordinate Mg(2+). Residues Lys-344, Arg-373, Ser-374, and Lys-395 each coordinate (2R)-2-phosphoglycerate. The active-site Proton acceptor is the Lys-344.

This sequence belongs to the enolase family. Mg(2+) serves as cofactor.

The protein resides in the cytoplasm. It is found in the secreted. The protein localises to the cell surface. The catalysed reaction is (2R)-2-phosphoglycerate = phosphoenolpyruvate + H2O. It participates in carbohydrate degradation; glycolysis; pyruvate from D-glyceraldehyde 3-phosphate: step 4/5. Its function is as follows. Catalyzes the reversible conversion of 2-phosphoglycerate (2-PG) into phosphoenolpyruvate (PEP). It is essential for the degradation of carbohydrates via glycolysis. In Streptococcus equi subsp. zooepidemicus (strain MGCS10565), this protein is Enolase.